A 417-amino-acid chain; its full sequence is NADH-quinone oxidoreductase subunit D (417 aa).

It belongs to the complex I 49 kDa subunit family. NDH-1 is composed of 14 different subunits. Subunits NuoB, C, D, E, F, and G constitute the peripheral sector of the complex.

The protein localises to the cell inner membrane. It carries out the reaction a quinone + NADH + 5 H(+)(in) = a quinol + NAD(+) + 4 H(+)(out). Functionally, NDH-1 shuttles electrons from NADH, via FMN and iron-sulfur (Fe-S) centers, to quinones in the respiratory chain. The immediate electron acceptor for the enzyme in this species is believed to be ubiquinone. Couples the redox reaction to proton translocation (for every two electrons transferred, four hydrogen ions are translocated across the cytoplasmic membrane), and thus conserves the redox energy in a proton gradient. This Paracidovorax citrulli (strain AAC00-1) (Acidovorax citrulli) protein is NADH-quinone oxidoreductase subunit D.